Here is a 418-residue protein sequence, read N- to C-terminus: Trimethyllysine dioxygenase, mitochondrial (418 aa).

Fe cation-binding residues include H239, D241, and H386.

Belongs to the gamma-BBH/TMLD family. Homodimer. It depends on Fe(2+) as a cofactor. L-ascorbate is required as a cofactor.

The protein localises to the mitochondrion matrix. It catalyses the reaction N(6),N(6),N(6)-trimethyl-L-lysine + 2-oxoglutarate + O2 = (3S)-3-hydroxy-N(6),N(6),N(6)-trimethyl-L-lysine + succinate + CO2. The protein operates within amine and polyamine biosynthesis; carnitine biosynthesis. Functionally, converts trimethyllysine (TML) into hydroxytrimethyllysine (HTML). This chain is Trimethyllysine dioxygenase, mitochondrial (TMLHE), found in Gallus gallus (Chicken).